A 216-amino-acid chain; its full sequence is Octanoyltransferase (216 aa).

Residues 30-216 (GEAGEAVWLL…KRQFFEVFGA (187 aa)) form the BPL/LPL catalytic domain. Residues 69–76 (RGGQYTYH), 149–151 (AIG), and 162–164 (GLS) contribute to the substrate site. Cys180 functions as the Acyl-thioester intermediate in the catalytic mechanism.

This sequence belongs to the LipB family.

Its subcellular location is the cytoplasm. It catalyses the reaction octanoyl-[ACP] + L-lysyl-[protein] = N(6)-octanoyl-L-lysyl-[protein] + holo-[ACP] + H(+). The protein operates within protein modification; protein lipoylation via endogenous pathway; protein N(6)-(lipoyl)lysine from octanoyl-[acyl-carrier-protein]: step 1/2. Catalyzes the transfer of endogenously produced octanoic acid from octanoyl-acyl-carrier-protein onto the lipoyl domains of lipoate-dependent enzymes. Lipoyl-ACP can also act as a substrate although octanoyl-ACP is likely to be the physiological substrate. The sequence is that of Octanoyltransferase from Jannaschia sp. (strain CCS1).